A 336-amino-acid chain; its full sequence is NEDD4 family-interacting protein 2 (336 aa).

Disordered regions lie at residues 1–24 (MARRRSQRVCASGPSMLNSARGAP) and 37–156 (SAAA…SITV). The Cytoplasmic segment spans residues 1-231 (MARRRSQRVC…ADQLRVGNDG (231 aa)). Residues 37-48 (SAAAAGATGSEE) are compositionally biased toward low complexity. The span at 78–99 (EHGEDSLSRKPDPEPGRMDHHQ) shows a compositional bias: basic and acidic residues. Positions 148-151 (PPPY) are interaction with NEDD4. The PPxY motif 1 motif lies at 148-151 (PPPY). Residues tyrosine 151, tyrosine 167, tyrosine 171, and tyrosine 177 each carry the phosphotyrosine; by SRC modification. 2 short sequence motifs (PPxY motif) span residues 174 to 177 (PPPY) and 184 to 186 (PTY). Residues 232 to 252 (IFMLAFFMAFIFNWLGFCLSF) traverse the membrane as a helical segment. Topologically, residues 253–257 (CITNT) are extracellular. The chain crosses the membrane as a helical span at residues 258–278 (IAGRYGAICGFGLSLIKWILI). The Cytoplasmic portion of the chain corresponds to 279-287 (VRFSDYFTG). A helical transmembrane segment spans residues 288–308 (YFNGQYWLWWIFLVLGLLLFF). Residues 309 to 336 (RGFVNYLKVRNMSESMAAAHRTRYFFLL) are Extracellular-facing.

As to quaternary structure, forms heterodimers with NDFIP1. Interacts with HECT domain-containing E3 ubiquitin-protein ligases, including NEDD4. Interacts with NEDD4L. Interacts with PTEN. When phosphorylated at Tyr-167, interacts with SRC and LYN SH2 domain. May thus act as a scaffold that recruits SRC to NDFIP1, enhancing NDFIP1 phosphorylation. Interacts with SLC11A2/DMT1. May interact with phosphorylated EGFR. Interacts with KCNH2. Ubiquitinated by NEDD4 and ITCH. Also ubiquitinated by NEDD4L. Ubiquitination by NEDD4 or NEDD4L does not affect turnover. In terms of processing, undergoes transient tyrosine-phosphorylation following EGF stimulation, most probably catalyzed by SRC. Phosphorylation on Tyr-151, Tyr-171 and Tyr-177 are dependent on the phosphorylation on Tyr-167. Also phosphorylated by LYN and FYN. Expressed in brain, lung, heart, skeletal muscle, kidney, liver and placenta.

The protein localises to the endosome membrane. It is found in the golgi apparatus membrane. Its subcellular location is the endosome. It localises to the multivesicular body membrane. In terms of biological role, activates HECT domain-containing E3 ubiquitin-protein ligases, including ITCH, NEDD4, NEDD4L, SMURF2, WWP1 and WWP2, and consequently modulates the stability of their targets. As a result, may control many cellular processes. Recruits ITCH, NEDD4 and SMURF2 to endosomal membranes. Negatively regulates KCNH2 potassium channel activity by decreasing its cell-surface expression and interfering with channel maturation through recruitment of NEDD4L to the Golgi apparatus and multivesicular body where it mediates KCNH2 degradation. May modulate EGFR signaling. Together with NDFIP1, limits the cytokine signaling and expansion of effector Th2 T-cells by promoting degradation of JAK1, probably by ITCH- and NEDD4L-mediated ubiquitination. The protein is NEDD4 family-interacting protein 2 (NDFIP2) of Homo sapiens (Human).